We begin with the raw amino-acid sequence, 452 residues long: Tubulin alpha-1 chain (452 aa).

A GTP-binding site is contributed by Gln-11. Lys-40 bears the N6-acetyllysine mark. Residues Glu-71, Gly-144, Thr-145, Thr-179, Asn-206, and Asn-228 each contribute to the GTP site. A Mg(2+)-binding site is contributed by Glu-71. Glu-254 is an active-site residue. Residues 430–452 (KDYEEVGAESGDGDDDGLGEEEY) form a disordered region. Residues 431 to 452 (DYEEVGAESGDGDDDGLGEEEY) show a composition bias toward acidic residues.

Belongs to the tubulin family. In terms of assembly, dimer of alpha and beta chains. A typical microtubule is a hollow water-filled tube with an outer diameter of 25 nm and an inner diameter of 15 nM. Alpha-beta heterodimers associate head-to-tail to form protofilaments running lengthwise along the microtubule wall with the beta-tubulin subunit facing the microtubule plus end conferring a structural polarity. Microtubules usually have 13 protofilaments but different protofilament numbers can be found in some organisms and specialized cells. It depends on Mg(2+) as a cofactor. Post-translationally, undergoes a tyrosination/detyrosination cycle, the cyclic removal and re-addition of a C-terminal tyrosine residue by the enzymes tubulin tyrosine carboxypeptidase (TTCP) and tubulin tyrosine ligase (TTL), respectively. Acetylation of alpha chains at Lys-40 stabilizes microtubules and affects affinity and processivity of microtubule motors. This modification has a role in multiple cellular functions, ranging from cell motility, cell cycle progression or cell differentiation to intracellular trafficking and signaling.

The protein resides in the cytoplasm. Its subcellular location is the cytoskeleton. The catalysed reaction is GTP + H2O = GDP + phosphate + H(+). In terms of biological role, tubulin is the major constituent of microtubules, a cylinder consisting of laterally associated linear protofilaments composed of alpha- and beta-tubulin heterodimers. Microtubules grow by the addition of GTP-tubulin dimers to the microtubule end, where a stabilizing cap forms. Below the cap, tubulin dimers are in GDP-bound state, owing to GTPase activity of alpha-tubulin. This chain is Tubulin alpha-1 chain (TUBA1), found in Pisum sativum (Garden pea).